The following is a 291-amino-acid chain: Geranyl diphosphate 2-C-methyltransferase (291 aa).

This sequence belongs to the geranyl diphosphate 2-C-methyltransferase family. The cofactor is Mg(2+).

The enzyme catalyses (2E)-geranyl diphosphate + S-adenosyl-L-methionine = (E)-2-methylgeranyl diphosphate + S-adenosyl-L-homocysteine + H(+). In terms of biological role, catalyzes the SAM-dependent methylation of geranyl diphosphate (GPP) to yield (E)-2-methylgeranyl diphosphate (2-MeGPP). In Streptomyces ambofaciens (strain ATCC 23877 / 3486 / DSM 40053 / JCM 4204 / NBRC 12836 / NRRL B-2516), this protein is Geranyl diphosphate 2-C-methyltransferase.